The primary structure comprises 357 residues: DNA polymerase IV 2 (357 aa).

Positions 4-184 (IIHVDMDAFY…LAVKKFHGVG (181 aa)) constitute a UmuC domain. Positions 8 and 102 each coordinate Mg(2+). Residue E103 is part of the active site.

Belongs to the DNA polymerase type-Y family. As to quaternary structure, monomer. Mg(2+) is required as a cofactor.

Its subcellular location is the cytoplasm. The enzyme catalyses DNA(n) + a 2'-deoxyribonucleoside 5'-triphosphate = DNA(n+1) + diphosphate. Its function is as follows. Poorly processive, error-prone DNA polymerase involved in untargeted mutagenesis. Copies undamaged DNA at stalled replication forks, which arise in vivo from mismatched or misaligned primer ends. These misaligned primers can be extended by PolIV. Exhibits no 3'-5' exonuclease (proofreading) activity. May be involved in translesional synthesis, in conjunction with the beta clamp from PolIII. This is DNA polymerase IV 2 (dinB2) from Agrobacterium fabrum (strain C58 / ATCC 33970) (Agrobacterium tumefaciens (strain C58)).